We begin with the raw amino-acid sequence, 113 residues long: Nucleoid-associated protein P9303_00241 (113 aa).

The disordered stretch occupies residues 90-113 (TTTMKEQMEELTGGLNLNLPGMSD).

Belongs to the YbaB/EbfC family. As to quaternary structure, homodimer.

It is found in the cytoplasm. The protein resides in the nucleoid. Its function is as follows. Binds to DNA and alters its conformation. May be involved in regulation of gene expression, nucleoid organization and DNA protection. The polypeptide is Nucleoid-associated protein P9303_00241 (Prochlorococcus marinus (strain MIT 9303)).